A 239-amino-acid chain; its full sequence is NAD(P)H-quinone oxidoreductase subunit K, chloroplastic (239 aa).

[4Fe-4S] cluster-binding residues include cysteine 43, cysteine 44, cysteine 108, and cysteine 139. Residues lysine 217–lysine 239 are disordered. Positions leucine 225–lysine 239 are enriched in basic and acidic residues.

It belongs to the complex I 20 kDa subunit family. As to quaternary structure, NDH is composed of at least 16 different subunits, 5 of which are encoded in the nucleus. It depends on [4Fe-4S] cluster as a cofactor.

It localises to the plastid. The protein localises to the chloroplast thylakoid membrane. It carries out the reaction a plastoquinone + NADH + (n+1) H(+)(in) = a plastoquinol + NAD(+) + n H(+)(out). It catalyses the reaction a plastoquinone + NADPH + (n+1) H(+)(in) = a plastoquinol + NADP(+) + n H(+)(out). Functionally, NDH shuttles electrons from NAD(P)H:plastoquinone, via FMN and iron-sulfur (Fe-S) centers, to quinones in the photosynthetic chain and possibly in a chloroplast respiratory chain. The immediate electron acceptor for the enzyme in this species is believed to be plastoquinone. Couples the redox reaction to proton translocation, and thus conserves the redox energy in a proton gradient. The sequence is that of NAD(P)H-quinone oxidoreductase subunit K, chloroplastic from Acorus calamus var. americanus (American sweet flag).